A 1208-amino-acid polypeptide reads, in one-letter code: Urease accessory protein 2 (1208 aa).

Coiled-coil stretches lie at residues Arg187–Ala362 and Ile400–Gln469. The 111-residue stretch at Asp523–His633 folds into the SMC hinge domain. Coiled coils occupy residues His688–Glu771 and Asn817–Gln903. Residues Glu748–Arg773 form a disordered region. The span at Gly756–Arg773 shows a compositional bias: basic and acidic residues.

It belongs to the SMC family. SMC3 subfamily. As to quaternary structure, component of cohesin complexes.

It is found in the nucleus. Central component of cohesin, a complex required for chromosome cohesion during the cell cycle. The cohesin complex may form a large proteinaceous ring within which sister chromatids can be trapped. At anaphase, the complex is cleaved and dissociates from chromatin, allowing sister chromatids to segregate. Cohesion is coupled to DNA replication and is involved in DNA repair. The cohesin complex also plays an important role in spindle pole assembly during mitosis and in chromosomes movement. Is unrelated to urease function in C.neoformans. The sequence is that of Urease accessory protein 2 from Cryptococcus neoformans var. grubii serotype A (strain H99 / ATCC 208821 / CBS 10515 / FGSC 9487) (Filobasidiella neoformans var. grubii).